The chain runs to 30 residues: Superoxide dismutase [Cu-Zn] 1 (30 aa).

The protein belongs to the Cu-Zn superoxide dismutase family. Cu cation serves as cofactor. Zn(2+) is required as a cofactor. Expressed in fruits, leaves and pollen grains.

Its subcellular location is the cytoplasm. The protein localises to the endoplasmic reticulum. The enzyme catalyses 2 superoxide + 2 H(+) = H2O2 + O2. With respect to regulation, inhibited by KCN and H(2)O(2). Its function is as follows. Destroys radicals which are normally produced within the cells and which are toxic to biological systems. Probably involved in the protection against oxidative stress during pollen development. The chain is Superoxide dismutase [Cu-Zn] 1 from Olea europaea (Common olive).